Reading from the N-terminus, the 282-residue chain is Elongation factor Ts (282 aa).

The segment at 79–82 (TDFV) is involved in Mg(2+) ion dislocation from EF-Tu.

This sequence belongs to the EF-Ts family.

The protein resides in the cytoplasm. Functionally, associates with the EF-Tu.GDP complex and induces the exchange of GDP to GTP. It remains bound to the aminoacyl-tRNA.EF-Tu.GTP complex up to the GTP hydrolysis stage on the ribosome. This is Elongation factor Ts from Shewanella woodyi (strain ATCC 51908 / MS32).